The sequence spans 156 residues: ADP-ribose 1''-phosphate phosphatase (156 aa).

The 156-residue stretch at 1 to 156 (MIQYIKGDLF…DNLHFNVYVI (156 aa)) folds into the Macro domain. Residues 7-9 (GDL), 25-27 (ACN), 32-37 (WGGGIA), and 127-133 (INAGIFG) each bind substrate.

This sequence belongs to the POA1 family.

The enzyme catalyses ADP-alpha-D-ribose 1''-phosphate + H2O = ADP-D-ribose + phosphate. Its function is as follows. Highly specific phosphatase involved in the metabolism of ADP-ribose 1''-phosphate (Appr1p) which is produced as a consequence of tRNA splicing. In Candida albicans (strain SC5314 / ATCC MYA-2876) (Yeast), this protein is ADP-ribose 1''-phosphate phosphatase (POA1).